A 93-amino-acid polypeptide reads, in one-letter code: Acylphosphatase (93 aa).

The Acylphosphatase-like domain maps to 7-93 (RLTAWVHGWV…TEQITGFSER (87 aa)). Residues Arg-22 and Asn-40 contribute to the active site.

Belongs to the acylphosphatase family.

It catalyses the reaction an acyl phosphate + H2O = a carboxylate + phosphate + H(+). In Mycobacterium tuberculosis (strain ATCC 25177 / H37Ra), this protein is Acylphosphatase (acyP).